Reading from the N-terminus, the 375-residue chain is MPVRRHILEDLHRSLGATFGEFAGWSVPMSYEGTLKEHMAVRREAGIFDISHMGRMIVSGEGATELLERIYTKRVSKTKVGFMSGPTLALNEYARVKDDEMPYRLGEEEWLIVPNAAVADAMLEYFSSIASSMGLNVSIRDLRERYALLALQGPGAARVMEEMGGGDLLDLKPLQFRENAGIAGVTAYIVSRSGWTGEDGFEIIAEVEAAKRIFKAAVEAGAKPAGIAARDTLRIEAGFVLGGHEYGEDPLRWPCAVSLRYGLGAIDWGKKGFVGEAALRACRREGVRWIRVGLVMKKKYARMIPRSGYRLYVDDVDVGWVTSGTFSPVIGRGVAQAYIDSRYAYIGDTIEVDVRGKRGEARLQEFPLVPLGSRG.

The protein belongs to the GcvT family. As to quaternary structure, the glycine cleavage system is composed of four proteins: P, T, L and H.

It carries out the reaction N(6)-[(R)-S(8)-aminomethyldihydrolipoyl]-L-lysyl-[protein] + (6S)-5,6,7,8-tetrahydrofolate = N(6)-[(R)-dihydrolipoyl]-L-lysyl-[protein] + (6R)-5,10-methylene-5,6,7,8-tetrahydrofolate + NH4(+). In terms of biological role, the glycine cleavage system catalyzes the degradation of glycine. The protein is Probable aminomethyltransferase of Aeropyrum pernix (strain ATCC 700893 / DSM 11879 / JCM 9820 / NBRC 100138 / K1).